Consider the following 396-residue polypeptide: 1-deoxy-D-xylulose 5-phosphate reductoisomerase (396 aa).

The NADPH site is built by T15, G16, S17, I18, G41, and N130. K131 serves as a coordination point for 1-deoxy-D-xylulose 5-phosphate. E132 contributes to the NADPH binding site. D155 is a binding site for Mn(2+). 1-deoxy-D-xylulose 5-phosphate contacts are provided by S156, E157, S181, and H204. Mn(2+) is bound at residue E157. Residue G210 coordinates NADPH. 1-deoxy-D-xylulose 5-phosphate contacts are provided by S217, N222, K223, and E226. Position 226 (E226) interacts with Mn(2+).

Belongs to the DXR family. Mg(2+) is required as a cofactor. Requires Mn(2+) as cofactor.

It catalyses the reaction 2-C-methyl-D-erythritol 4-phosphate + NADP(+) = 1-deoxy-D-xylulose 5-phosphate + NADPH + H(+). The protein operates within isoprenoid biosynthesis; isopentenyl diphosphate biosynthesis via DXP pathway; isopentenyl diphosphate from 1-deoxy-D-xylulose 5-phosphate: step 1/6. Catalyzes the NADPH-dependent rearrangement and reduction of 1-deoxy-D-xylulose-5-phosphate (DXP) to 2-C-methyl-D-erythritol 4-phosphate (MEP). The chain is 1-deoxy-D-xylulose 5-phosphate reductoisomerase from Bifidobacterium longum (strain DJO10A).